Here is a 407-residue protein sequence, read N- to C-terminus: Phosphopentomutase (407 aa).

6 residues coordinate Mn(2+): Asp-10, Asp-306, His-311, Asp-347, His-348, and His-359.

Belongs to the phosphopentomutase family. Mn(2+) is required as a cofactor.

The protein resides in the cytoplasm. The catalysed reaction is 2-deoxy-alpha-D-ribose 1-phosphate = 2-deoxy-D-ribose 5-phosphate. It carries out the reaction alpha-D-ribose 1-phosphate = D-ribose 5-phosphate. It participates in carbohydrate degradation; 2-deoxy-D-ribose 1-phosphate degradation; D-glyceraldehyde 3-phosphate and acetaldehyde from 2-deoxy-alpha-D-ribose 1-phosphate: step 1/2. Isomerase that catalyzes the conversion of deoxy-ribose 1-phosphate (dRib-1-P) and ribose 1-phosphate (Rib-1-P) to deoxy-ribose 5-phosphate (dRib-5-P) and ribose 5-phosphate (Rib-5-P), respectively. This Yersinia pestis bv. Antiqua (strain Angola) protein is Phosphopentomutase.